A 150-amino-acid polypeptide reads, in one-letter code: MKDEVALLASVTLLGVLLQAYFSLQVISARRAFRVSPPLTTGPPEFERIYRAQVNCSEYFPLFLAMLWVAGIFFHEGAAALCGLVYLFARLRYFQGYARSAQQRLAPLYASARALWLLVALAALGLLAHFLPAELRAALLGQLRKLLLRS.

Residues 1 to 6 (MKDEVA) are Cytoplasmic-facing. Residues 7–27 (LLASVTLLGVLLQAYFSLQVI) form a helical membrane-spanning segment. Residues 28 to 48 (SARRAFRVSPPLTTGPPEFER) lie on the Lumenal side of the membrane. Arginine 30 lines the glutathione pocket. Arginine 31 (proton donor) is an active-site residue. Serine 36 carries the post-translational modification Phosphoserine. A helical membrane pass occupies residues 49–69 (IYRAQVNCSEYFPLFLAMLWV). Residues 51-55 (RAQVN) and 58-59 (EY) each bind glutathione. Residues 70–73 (AGIF) are Cytoplasmic-facing. Residues 74–94 (FHEGAAALCGLVYLFARLRYF) form a helical membrane-spanning segment. 93–97 (YFQGY) contacts glutathione. The Lumenal portion of the chain corresponds to 95 to 104 (QGYARSAQQR). The active-site Proton acceptor is the arginine 104. A helical transmembrane segment spans residues 105–124 (LAPLYASARALWLLVALAAL). Residues 125–150 (GLLAHFLPAELRAALLGQLRKLLLRS) lie on the Cytoplasmic side of the membrane.

Belongs to the MAPEG family. Homotrimer. Interacts with ALOX5AP and ALOX5. Post-translationally, phosphorylation at Ser-36 by RPS6KB1 inhibits the leukotriene-C4 synthase activity.

It localises to the nucleus outer membrane. The protein localises to the endoplasmic reticulum membrane. Its subcellular location is the nucleus membrane. It carries out the reaction leukotriene C4 = leukotriene A4 + glutathione. It catalyses the reaction (13S,14S)-epoxy-(4Z,7Z,9E,11E,16Z,19Z)-docosahexaenoate + glutathione = (13R)-S-glutathionyl-(14S)-hydroxy-(4Z,7Z,9E,11E,16Z,19Z)-docosahexaenoate. It participates in lipid metabolism; leukotriene C4 biosynthesis. Inhibited by MK886. Catalyzes the conjugation of leukotriene A4 with reduced glutathione (GSH) to form leukotriene C4 with high specificity. Can also catalyze the transfer of a glutathionyl group from glutathione (GSH) to 13(S),14(S)-epoxy-docosahexaenoic acid to form maresin conjugate in tissue regeneration 1 (MCTR1), a bioactive lipid mediator that possess potent anti-inflammatory and proresolving actions. This Bos taurus (Bovine) protein is Leukotriene C4 synthase (LTC4S).